The following is a 449-amino-acid chain: Neuraminidase (449 aa).

Over 1-6 (MNPNQK) the chain is Intravirion. The chain crosses the membrane as a helical span at residues 7–34 (IITIGSICMVTGIVSLMLQIGNMISIWV). Positions 11–33 (GSICMVTGIVSLMLQIGNMISIW) are involved in apical transport and lipid raft association. Residues 35-449 (SHSIHTGNQH…GAELPFTIDK (415 aa)) lie on the Virion surface side of the membrane. A hypervariable stalk region region spans residues 36 to 70 (HSIHTGNQHQSEPISNTNFLTEKAVASVKLAGNSS). Residues 71–449 (LCPINGWAVY…GAELPFTIDK (379 aa)) are head of neuraminidase. 8 disulfides stabilise this stretch: Cys-72/Cys-397, Cys-104/Cys-109, Cys-164/Cys-211, Cys-213/Cys-218, Cys-259/Cys-272, Cys-261/Cys-270, Cys-298/Cys-315, and Cys-401/Cys-426. A substrate-binding site is contributed by Arg-98. The active-site Proton donor/acceptor is the Asp-131. Residue Arg-132 coordinates substrate. 257–258 (EE) lines the substrate pocket. Arg-273 is a binding site for substrate. The Ca(2+) site is built by Asp-274, Gly-278, Asp-304, Gly-322, and Tyr-324. Arg-348 serves as a coordination point for substrate. The Nucleophile role is filled by Tyr-382.

Belongs to the glycosyl hydrolase 34 family. In terms of assembly, homotetramer. Ca(2+) serves as cofactor. N-glycosylated.

The protein localises to the virion membrane. It localises to the host apical cell membrane. It carries out the reaction Hydrolysis of alpha-(2-&gt;3)-, alpha-(2-&gt;6)-, alpha-(2-&gt;8)- glycosidic linkages of terminal sialic acid residues in oligosaccharides, glycoproteins, glycolipids, colominic acid and synthetic substrates.. With respect to regulation, inhibited by the neuraminidase inhibitors zanamivir (Relenza) and oseltamivir (Tamiflu). These drugs interfere with the release of progeny virus from infected cells and are effective against all influenza strains. Resistance to neuraminidase inhibitors is quite rare. Catalyzes the removal of terminal sialic acid residues from viral and cellular glycoconjugates. Cleaves off the terminal sialic acids on the glycosylated HA during virus budding to facilitate virus release. Additionally helps virus spread through the circulation by further removing sialic acids from the cell surface. These cleavages prevent self-aggregation and ensure the efficient spread of the progeny virus from cell to cell. Otherwise, infection would be limited to one round of replication. Described as a receptor-destroying enzyme because it cleaves a terminal sialic acid from the cellular receptors. May facilitate viral invasion of the upper airways by cleaving the sialic acid moities on the mucin of the airway epithelial cells. Likely to plays a role in the budding process through its association with lipid rafts during intracellular transport. May additionally display a raft-association independent effect on budding. Plays a role in the determination of host range restriction on replication and virulence. Sialidase activity in late endosome/lysosome traffic seems to enhance virus replication. This Influenza A virus (strain A/Vietnam/1203/2004 H5N1) protein is Neuraminidase.